A 207-amino-acid polypeptide reads, in one-letter code: Urease accessory protein UreG (207 aa).

Glycine 14–threonine 21 lines the GTP pocket.

It belongs to the SIMIBI class G3E GTPase family. UreG subfamily. In terms of assembly, homodimer. UreD, UreF and UreG form a complex that acts as a GTP-hydrolysis-dependent molecular chaperone, activating the urease apoprotein by helping to assemble the nickel containing metallocenter of UreC. The UreE protein probably delivers the nickel.

The protein localises to the cytoplasm. Facilitates the functional incorporation of the urease nickel metallocenter. This process requires GTP hydrolysis, probably effectuated by UreG. This is Urease accessory protein UreG from Pseudomonas putida (strain GB-1).